Here is a 650-residue protein sequence, read N- to C-terminus: Fructose-1,6-bisphosphatase class 3 (650 aa).

The protein belongs to the FBPase class 3 family. Mn(2+) is required as a cofactor.

It catalyses the reaction beta-D-fructose 1,6-bisphosphate + H2O = beta-D-fructose 6-phosphate + phosphate. It participates in carbohydrate biosynthesis; gluconeogenesis. This chain is Fructose-1,6-bisphosphatase class 3, found in Staphylococcus xylosus.